The sequence spans 172 residues: S-ribosylhomocysteine lyase (172 aa).

Residues His-54, His-58, and Cys-128 each contribute to the Fe cation site.

It belongs to the LuxS family. As to quaternary structure, homodimer. Fe cation is required as a cofactor.

The enzyme catalyses S-(5-deoxy-D-ribos-5-yl)-L-homocysteine = (S)-4,5-dihydroxypentane-2,3-dione + L-homocysteine. Its function is as follows. Involved in the synthesis of autoinducer 2 (AI-2) which is secreted by bacteria and is used to communicate both the cell density and the metabolic potential of the environment. The regulation of gene expression in response to changes in cell density is called quorum sensing. Catalyzes the transformation of S-ribosylhomocysteine (RHC) to homocysteine (HC) and 4,5-dihydroxy-2,3-pentadione (DPD). This Aliivibrio fischeri (strain MJ11) (Vibrio fischeri) protein is S-ribosylhomocysteine lyase.